A 602-amino-acid chain; its full sequence is RecBCD enzyme subunit RecD (602 aa).

An ATP-binding site is contributed by Gly174–Thr181.

Belongs to the RecD family. In terms of assembly, heterotrimer of RecB, RecC and RecD. All subunits contribute to DNA-binding.

It catalyses the reaction Couples ATP hydrolysis with the unwinding of duplex DNA at the replication fork by translocating in the 5'-3' direction. This creates two antiparallel DNA single strands (ssDNA). The leading ssDNA polymer is the template for DNA polymerase III holoenzyme which synthesizes a continuous strand.. The catalysed reaction is ATP + H2O = ADP + phosphate + H(+). A helicase/nuclease that prepares dsDNA breaks (DSB) for recombinational DNA repair. Binds to DSBs and unwinds DNA via a highly rapid and processive ATP-dependent bidirectional helicase activity. Unwinds dsDNA until it encounters a Chi (crossover hotspot instigator) sequence from the 3' direction. Cuts ssDNA a few nucleotides 3' to the Chi site. The properties and activities of the enzyme are changed at Chi. The Chi-altered holoenzyme produces a long 3'-ssDNA overhang and facilitates RecA-binding to the ssDNA for homologous DNA recombination and repair. Holoenzyme degrades any linearized DNA that is unable to undergo homologous recombination. In the holoenzyme this subunit has ssDNA-dependent ATPase and 5'-3' helicase activity. When added to pre-assembled RecBC greatly stimulates nuclease activity and augments holoenzyme processivity. Negatively regulates the RecA-loading ability of RecBCD. This Buchnera aphidicola subsp. Schizaphis graminum (strain Sg) protein is RecBCD enzyme subunit RecD.